The chain runs to 266 residues: tRNA pseudouridine synthase A (266 aa).

Catalysis depends on D53, which acts as the Nucleophile. Position 109 (Y109) interacts with substrate.

The protein belongs to the tRNA pseudouridine synthase TruA family.

It carries out the reaction uridine(38/39/40) in tRNA = pseudouridine(38/39/40) in tRNA. Functionally, formation of pseudouridine at positions 38, 39 and 40 in the anticodon stem and loop of transfer RNAs. The polypeptide is tRNA pseudouridine synthase A (Methanocella arvoryzae (strain DSM 22066 / NBRC 105507 / MRE50)).